The primary structure comprises 1342 residues: DNA-directed RNA polymerase subunit beta (1342 aa).

The protein belongs to the RNA polymerase beta chain family. As to quaternary structure, the RNAP catalytic core consists of 2 alpha, 1 beta, 1 beta' and 1 omega subunit. When a sigma factor is associated with the core the holoenzyme is formed, which can initiate transcription.

The catalysed reaction is RNA(n) + a ribonucleoside 5'-triphosphate = RNA(n+1) + diphosphate. In terms of biological role, DNA-dependent RNA polymerase catalyzes the transcription of DNA into RNA using the four ribonucleoside triphosphates as substrates. The polypeptide is DNA-directed RNA polymerase subunit beta (Klebsiella pneumoniae subsp. pneumoniae (strain ATCC 700721 / MGH 78578)).